The chain runs to 202 residues: NADH-quinone oxidoreductase subunit C (202 aa).

It belongs to the complex I 30 kDa subunit family. NDH-1 is composed of 14 different subunits. Subunits NuoB, C, D, E, F, and G constitute the peripheral sector of the complex.

The protein localises to the cell inner membrane. It catalyses the reaction a quinone + NADH + 5 H(+)(in) = a quinol + NAD(+) + 4 H(+)(out). NDH-1 shuttles electrons from NADH, via FMN and iron-sulfur (Fe-S) centers, to quinones in the respiratory chain. The immediate electron acceptor for the enzyme in this species is believed to be ubiquinone. Couples the redox reaction to proton translocation (for every two electrons transferred, four hydrogen ions are translocated across the cytoplasmic membrane), and thus conserves the redox energy in a proton gradient. The sequence is that of NADH-quinone oxidoreductase subunit C from Albidiferax ferrireducens (strain ATCC BAA-621 / DSM 15236 / T118) (Rhodoferax ferrireducens).